The sequence spans 312 residues: Ribosomal protein L11 methyltransferase (312 aa).

Residues Thr162, Gly183, Asp205, and Asn248 each coordinate S-adenosyl-L-methionine.

The protein belongs to the methyltransferase superfamily. PrmA family.

It localises to the cytoplasm. The catalysed reaction is L-lysyl-[protein] + 3 S-adenosyl-L-methionine = N(6),N(6),N(6)-trimethyl-L-lysyl-[protein] + 3 S-adenosyl-L-homocysteine + 3 H(+). Its function is as follows. Methylates ribosomal protein L11. This chain is Ribosomal protein L11 methyltransferase, found in Geobacillus kaustophilus (strain HTA426).